The chain runs to 202 residues: Translation initiation factor IF-3 (202 aa).

The tract at residues 178–202 (TPRKTPLLKKESETTEPKKALRSIN) is disordered. Residues 185-196 (LKKESETTEPKK) are compositionally biased toward basic and acidic residues.

This sequence belongs to the IF-3 family. Monomer.

It is found in the cytoplasm. Its function is as follows. IF-3 binds to the 30S ribosomal subunit and shifts the equilibrium between 70S ribosomes and their 50S and 30S subunits in favor of the free subunits, thus enhancing the availability of 30S subunits on which protein synthesis initiation begins. This is Translation initiation factor IF-3 from Prochlorococcus marinus (strain NATL1A).